The chain runs to 101 residues: Small ribosomal subunit protein uS14 (101 aa).

The disordered stretch occupies residues 52–72; sequence PRDSSPVRQRRRCRSTGRPRG. Residues 59 to 72 are compositionally biased toward basic residues; sequence RQRRRCRSTGRPRG.

It belongs to the universal ribosomal protein uS14 family. In terms of assembly, part of the 30S ribosomal subunit. Contacts proteins S3 and S10.

In terms of biological role, binds 16S rRNA, required for the assembly of 30S particles and may also be responsible for determining the conformation of the 16S rRNA at the A site. This Nitrosococcus oceani (strain ATCC 19707 / BCRC 17464 / JCM 30415 / NCIMB 11848 / C-107) protein is Small ribosomal subunit protein uS14.